The chain runs to 226 residues: 7-cyano-7-deazaguanine synthase (226 aa).

An ATP-binding site is contributed by 8 to 18 (LSGGLDSTTTL). Residues Cys188, Cys198, Cys201, and Cys204 each coordinate Zn(2+).

Belongs to the QueC family. The cofactor is Zn(2+).

The enzyme catalyses 7-carboxy-7-deazaguanine + NH4(+) + ATP = 7-cyano-7-deazaguanine + ADP + phosphate + H2O + H(+). The protein operates within purine metabolism; 7-cyano-7-deazaguanine biosynthesis. Functionally, catalyzes the ATP-dependent conversion of 7-carboxy-7-deazaguanine (CDG) to 7-cyano-7-deazaguanine (preQ(0)). The protein is 7-cyano-7-deazaguanine synthase of Nitrosomonas eutropha (strain DSM 101675 / C91 / Nm57).